The primary structure comprises 1106 residues: Protein shuttle craft (1106 aa).

2 disordered regions span residues 7–26 (QLTN…AMAD) and 189–371 (PAAA…KLSQ). A compositionally biased stretch (low complexity) spans 189–201 (PAAATTNGNSTAS). Composition is skewed to basic and acidic residues over residues 232–270 (NYER…RDSR) and 278–323 (RRSD…RDRI). Thr335 is modified (phosphothreonine). Phosphoserine occurs at positions 336, 339, 343, and 354. Polar residues predominate over residues 336 to 354 (SNESAHPSPEKQSQLQQIS). The RING-type; atypical zinc-finger motif lies at 386-433 (CLVCVEAIKSHQPTWSCRNCYHMLHLKCTITWASSSKSEVGWRCPACQ). NF-X1-type zinc fingers lie at residues 474–492 (CSHA…PCQA), 527–546 (CGEH…ACSE), 585–604 (CGHH…PCKL), 644–667 (CGKP…PCPK), 706–725 (CGKH…DCPL), 733–752 (CGKH…PCYR), 844–867 (CGGH…ICRQ), and 876–896 (CGHK…PCKE). The region spanning 1006-1071 (TKSVYETLTD…NRNVVATAHK (66 aa)) is the R3H domain.

Belongs to the NFX1 family. In terms of tissue distribution, ovaries and embryonic central nervous system.

It is found in the nucleus. In terms of biological role, plays an essential role during the late stages of embryonic neurogenesis. May either fine-tune the guidance or the spatial maintenance of the migrating SNB and in nerve roots, which are composed of axons originating from distinct groups of motor neurons and may be required to either guide or maintain the position of these nerves along a direct and straight path to their ultimate targets in particular muscle fields. May play a role in egg chamber development and/or may confer essential maternal contributions to the early embryo. The sequence is that of Protein shuttle craft (stc) from Drosophila melanogaster (Fruit fly).